The following is a 208-amino-acid chain: Uracil phosphoribosyltransferase (208 aa).

5-phospho-alpha-D-ribose 1-diphosphate contacts are provided by residues Arg-78, Arg-103, and 130–138; that span reads DPMLATGGS. Uracil-binding positions include Ile-193 and 198 to 200; that span reads GDA. Asp-199 contacts 5-phospho-alpha-D-ribose 1-diphosphate.

This sequence belongs to the UPRTase family. The cofactor is Mg(2+).

The enzyme catalyses UMP + diphosphate = 5-phospho-alpha-D-ribose 1-diphosphate + uracil. It participates in pyrimidine metabolism; UMP biosynthesis via salvage pathway; UMP from uracil: step 1/1. Allosterically activated by GTP. Its function is as follows. Catalyzes the conversion of uracil and 5-phospho-alpha-D-ribose 1-diphosphate (PRPP) to UMP and diphosphate. This is Uracil phosphoribosyltransferase from Neisseria meningitidis serogroup C (strain 053442).